Here is a 178-residue protein sequence, read N- to C-terminus: Nascent polypeptide-associated complex subunit alpha (178 aa).

An NAC-A/B domain is found at 20 to 84 (SKNEKKAREL…AKVDDMNKRI (65 aa)). The segment covering 87-104 (AQAQQEQQEALTKAAADA) has biased composition (low complexity). Residues 87-142 (AQAQQEQQEALTKAAADAETADKSPESITNDLQNASLEDKTVEEDEGEVDETGLDS) are disordered. The span at 112–122 (ESITNDLQNAS) shows a compositional bias: polar residues. A compositionally biased stretch (acidic residues) spans 127-139 (TVEEDEGEVDETG). The UBA domain maps to 140–178 (LDSKDIEIIVEQTQVSRAKAVKALRAHKGDMVNAIMELS).

It belongs to the NAC-alpha family. As to quaternary structure, part of the nascent polypeptide-associated complex (NAC), consisting of EGD2 and EGD1. NAC associates with ribosomes via EGD1.

The protein resides in the cytoplasm. Its subcellular location is the nucleus. Its function is as follows. Component of the nascent polypeptide-associated complex (NAC), a dynamic component of the ribosomal exit tunnel, protecting the emerging polypeptides from interaction with other cytoplasmic proteins to ensure appropriate nascent protein targeting. The NAC complex also promotes mitochondrial protein import by enhancing productive ribosome interactions with the outer mitochondrial membrane and blocks the inappropriate interaction of ribosomes translating non-secretory nascent polypeptides with translocation sites in the membrane of the endoplasmic reticulum. EGD2 may also be involved in transcription regulation. This is Nascent polypeptide-associated complex subunit alpha (EGD2) from Meyerozyma guilliermondii (strain ATCC 6260 / CBS 566 / DSM 6381 / JCM 1539 / NBRC 10279 / NRRL Y-324) (Yeast).